The chain runs to 282 residues: Transmembrane protein 41B (282 aa).

The segment at 1-36 is disordered; sequence MAKKRAGNRETESSPLVEQEPRPSKETPVPKGAQSP. Helical transmembrane passes span 43 to 63, 102 to 122, 138 to 160, 188 to 208, 216 to 236, and 251 to 271; these read MSIL…YLVF, TQVL…AIPG, LALF…LSYL, LINY…FINI, PLGV…FVAI, and AVSW…ILPV. Residues 131 to 242 form a VTT domain; required for its function in autophagy region; it reads GYLYPFPLAL…FVAINAGTTL (112 aa).

The protein belongs to the TMEM41 family.

Its subcellular location is the endoplasmic reticulum membrane. The protein resides in the endomembrane system. It catalyses the reaction a 1,2-diacyl-sn-glycero-3-phospho-L-serine(in) = a 1,2-diacyl-sn-glycero-3-phospho-L-serine(out). The catalysed reaction is cholesterol(in) = cholesterol(out). The enzyme catalyses a 1,2-diacyl-sn-glycero-3-phosphocholine(in) = a 1,2-diacyl-sn-glycero-3-phosphocholine(out). It carries out the reaction a 1,2-diacyl-sn-glycero-3-phosphoethanolamine(in) = a 1,2-diacyl-sn-glycero-3-phosphoethanolamine(out). Its function is as follows. Phospholipid scramblase involved in lipid homeostasis and membrane dynamics processes. Has phospholipid scramblase activity toward cholesterol and phosphatidylserine, as well as phosphatidylethanolamine and phosphatidylcholine. Required for autophagosome formation: participates in early stages of autophagosome biogenesis at the endoplasmic reticulum (ER) membrane by reequilibrating the leaflets of the ER as lipids are extracted by atg2 (atg2a or atg2b) to mediate autophagosome assembly. In addition to autophagy, involved in other processes in which phospholipid scramblase activity is required. Required for normal motor neuron development. The sequence is that of Transmembrane protein 41B from Danio rerio (Zebrafish).